We begin with the raw amino-acid sequence, 433 residues long: Histidinol dehydrogenase (433 aa).

The NAD(+) site is built by tyrosine 130, glutamine 191, and asparagine 214. Substrate-binding residues include serine 237, glutamine 259, and histidine 262. Zn(2+) is bound by residues glutamine 259 and histidine 262. Catalysis depends on proton acceptor residues glutamate 327 and histidine 328. Histidine 328, aspartate 361, glutamate 415, and histidine 420 together coordinate substrate. Aspartate 361 serves as a coordination point for Zn(2+). Histidine 420 provides a ligand contact to Zn(2+).

Belongs to the histidinol dehydrogenase family. Requires Zn(2+) as cofactor.

The enzyme catalyses L-histidinol + 2 NAD(+) + H2O = L-histidine + 2 NADH + 3 H(+). The protein operates within amino-acid biosynthesis; L-histidine biosynthesis; L-histidine from 5-phospho-alpha-D-ribose 1-diphosphate: step 9/9. In terms of biological role, catalyzes the sequential NAD-dependent oxidations of L-histidinol to L-histidinaldehyde and then to L-histidine. The chain is Histidinol dehydrogenase from Ruegeria pomeroyi (strain ATCC 700808 / DSM 15171 / DSS-3) (Silicibacter pomeroyi).